Here is a 598-residue protein sequence, read N- to C-terminus: Arginine--tRNA ligase (598 aa).

Residues 131–141 (ANPTGPMHVGH) carry the 'HIGH' region motif. The interval 288 to 309 (KLPPPKSKKGQPPPQPQPDEEG) is disordered.

It belongs to the class-I aminoacyl-tRNA synthetase family. In terms of assembly, monomer.

It localises to the cytoplasm. It carries out the reaction tRNA(Arg) + L-arginine + ATP = L-arginyl-tRNA(Arg) + AMP + diphosphate. The protein is Arginine--tRNA ligase of Anaeromyxobacter dehalogenans (strain 2CP-1 / ATCC BAA-258).